A 626-amino-acid chain; its full sequence is MARTAPAASFESLESDLDQKFAYPASSKTYIPGSRPDIRVPMRTILQTSTRTEKGEMPNPPIPVYDTSGPYSDPDVHIDLKAGLPALREKWIAERGDTEVLPGLSSEYGRDRANDPATAHLRFAQLTNPRRAKAGANVSQMHYARKGIITPEMEYVALRESLNLQALYDKPEYKALLRQHPGNALGAGLPLRPEDITPEFVRNEIATGRAIIPANINHTELEPMAIGRNFRVKINGNLGNSAVTSSLAEEVEKMVWSIRWGADTIMDLSTGKHIHETREWILRNSPVPIGTVPIYQALDKTGGIAEDLTWEMFRDTLIEQAEQGVDYFTIHAGVLLRYVPLTADRVTGIVSRGGSIMAKWCLAHHKENFLYTHFDEICEIMKAYDVSFSLGDGLRPGCIADSNDDAQFGELRTLGELTAKAWKHDVQVMIEGPGHVPLQRIQANMDEELKHCYEAPFYTLGPLVTDIAPGYDHITSGIGAANIGWMGTAMLCYVTPKEHLGLPDKEDVREGIITYKIAAHAADLAKGWPGAQLRDNALSKARFEFRWEDQFNLGLDPERARSYHDATLPAEGAKIAHFCSMCGPKFCSMKITQEVRDYAASLPKEAQQGMEEKSIEFLKKGSKIYS.

Substrate-binding positions include Asn-237, Met-266, Tyr-295, His-331, 351-353, 392-395, and Glu-431; these read SRG and DGLR. Residue His-435 coordinates Zn(2+). Tyr-458 is a substrate binding site. Residue His-499 participates in Zn(2+) binding. [4Fe-4S] cluster is bound by residues Cys-579, Cys-582, and Cys-587.

It belongs to the ThiC family. In terms of assembly, homodimer. The cofactor is [4Fe-4S] cluster.

It catalyses the reaction 5-amino-1-(5-phospho-beta-D-ribosyl)imidazole + S-adenosyl-L-methionine = 4-amino-2-methyl-5-(phosphooxymethyl)pyrimidine + CO + 5'-deoxyadenosine + formate + L-methionine + 3 H(+). It functions in the pathway cofactor biosynthesis; thiamine diphosphate biosynthesis. Catalyzes the synthesis of the hydroxymethylpyrimidine phosphate (HMP-P) moiety of thiamine from aminoimidazole ribotide (AIR) in a radical S-adenosyl-L-methionine (SAM)-dependent reaction. This Cupriavidus pinatubonensis (strain JMP 134 / LMG 1197) (Cupriavidus necator (strain JMP 134)) protein is Phosphomethylpyrimidine synthase.